We begin with the raw amino-acid sequence, 245 residues long: MTDKYAFSLTTFSPNGKLVQIEYALNAVNAGVTSVGIKATDGVVLATEKKPTSELAIGASLEKVCAITPDIGMVYSGMGPDFRVLVDKSRKVAQTTYKKIYNEYPPTKILVQEIASVMQESTQSGGVRPFGVSLLVAGMDEKGPSLYQVDPSGTYFAWKATAIGKSSTAAKTFLEKRYNDELELDDAVHTAILALKETFEGELTEDNIEIAVVSTKPTDSGIVGVPGGHFCRLSQSEIRDYLDQV.

The protein belongs to the peptidase T1A family. As to quaternary structure, the 26S proteasome consists of a 20S proteasome core and two 19S regulatory subunits. The 20S proteasome core is composed of 28 subunits that are arranged in four stacked rings, resulting in a barrel-shaped structure. The two end rings are each formed by seven alpha subunits, and the two central rings are each formed by seven beta subunits. The catalytic chamber with the active sites is on the inside of the barrel.

The protein resides in the cytoplasm. It is found in the nucleus. In terms of biological role, the proteasome is a multicatalytic proteinase complex which is characterized by its ability to cleave peptides with Arg, Phe, Tyr, Leu, and Glu adjacent to the leaving group at neutral or slightly basic pH. The proteasome has an ATP-dependent proteolytic activity. This is Probable proteasome subunit alpha type-2 (pre8) from Schizosaccharomyces pombe (strain 972 / ATCC 24843) (Fission yeast).